A 768-amino-acid polypeptide reads, in one-letter code: Solabiose phosphorylase (768 aa).

The Proton donor role is filled by aspartate 456.

It belongs to the glycosyl hydrolase 94 family.

The catalysed reaction is solabiose + phosphate = D-galactose + alpha-D-glucose 1-phosphate. In terms of biological role, catalyzes the reversible phosphorolysis of solabiose. Catalyzes the phosphorolysis and synthesis of solabiose through a sequential bi-bi mechanism involving the formation of a ternary complex. Is probably involved in the metabolism of solabiose released from solabiose-containing compounds. The polypeptide is Solabiose phosphorylase (Paenibacillus borealis).